The following is a 70-amino-acid chain: DNA gyrase inhibitor YacG (70 aa).

Zn(2+)-binding residues include C20, C23, C35, and C39.

The protein belongs to the DNA gyrase inhibitor YacG family. In terms of assembly, interacts with GyrB. Zn(2+) is required as a cofactor.

Functionally, inhibits all the catalytic activities of DNA gyrase by preventing its interaction with DNA. Acts by binding directly to the C-terminal domain of GyrB, which probably disrupts DNA binding by the gyrase. In Rhizobium etli (strain ATCC 51251 / DSM 11541 / JCM 21823 / NBRC 15573 / CFN 42), this protein is DNA gyrase inhibitor YacG.